The primary structure comprises 202 residues: LexA repressor (202 aa).

Positions 28-48 form a DNA-binding region, H-T-H motif; it reads RAEIAQQLGFRSPNAAEEHLK. Residues Ser-119 and Lys-156 each act as for autocatalytic cleavage activity in the active site.

The protein belongs to the peptidase S24 family. In terms of assembly, homodimer.

It carries out the reaction Hydrolysis of Ala-|-Gly bond in repressor LexA.. Its function is as follows. Represses a number of genes involved in the response to DNA damage (SOS response), including recA and lexA. Binds to the 16 bp palindromic sequence 5'-CTGTATATATATACAG-3'. In the presence of single-stranded DNA, RecA interacts with LexA causing an autocatalytic cleavage which disrupts the DNA-binding part of LexA, leading to derepression of the SOS regulon and eventually DNA repair. The sequence is that of LexA repressor from Pectobacterium carotovorum subsp. carotovorum (strain PC1).